Here is a 292-residue protein sequence, read N- to C-terminus: Phosphatidylglycerol--prolipoprotein diacylglyceryl transferase (292 aa).

The next 4 membrane-spanning stretches (helical) occupy residues 24-44 (ISVHWYGIMYVSAMLIALLIA), 65-85 (FFIWVEIGVILGGRIGYVLIY), 110-130 (GISGFSYHGAMAGFVLAAIIF), and 136-156 (QSFWIFMDLSAISIPLGYVFG). Arginine 157 serves as a coordination point for a 1,2-diacyl-sn-glycero-3-phospho-(1'-sn-glycerol). 3 helical membrane-spanning segments follow: residues 192–212 (SQLFEAFAEGIIVFILLICLL), 219–239 (GTLLVAYGVFYALARFVCEYF), and 256–276 (GQILSLVMLVISIFLGLFVFV).

The protein belongs to the Lgt family.

The protein resides in the cell inner membrane. The catalysed reaction is L-cysteinyl-[prolipoprotein] + a 1,2-diacyl-sn-glycero-3-phospho-(1'-sn-glycerol) = an S-1,2-diacyl-sn-glyceryl-L-cysteinyl-[prolipoprotein] + sn-glycerol 1-phosphate + H(+). It functions in the pathway protein modification; lipoprotein biosynthesis (diacylglyceryl transfer). Functionally, catalyzes the transfer of the diacylglyceryl group from phosphatidylglycerol to the sulfhydryl group of the N-terminal cysteine of a prolipoprotein, the first step in the formation of mature lipoproteins. The polypeptide is Phosphatidylglycerol--prolipoprotein diacylglyceryl transferase (Helicobacter hepaticus (strain ATCC 51449 / 3B1)).